Reading from the N-terminus, the 1633-residue chain is Serine-aspartate repeat-containing protein F (1633 aa).

The signal sequence occupies residues 1–45 (MKKRRQGPINKRVDFLSNKVNKYSIRKFTVGTASILVGATLMFGA). A ligand binding A region region spans residues 46-678 (ADNEAKAAED…GSSTAQGDNP (633 aa)). The disordered stretch occupies residues 51–269 (KAAEDNQLES…SISTDSSVND (219 aa)). A compositionally biased stretch (basic and acidic residues) spans 61-74 (ASKEEQKGSRDNES). Composition is skewed to polar residues over residues 85–99 (GSHSSEKTTNVNNAT) and 146–168 (PKTSTTQQDSTEKNNPSLKDNLN). Over residues 175–184 (KESKTDEHST) the composition is skewed to basic and acidic residues. Polar residues predominate over residues 186-226 (QAQMSTNKSNLDTNDSPTQSEKTSSQANNDSTDNQSAPSKQ). The span at 227-253 (LDSKPSEQKVYKTKFNDEPTQDVEHTT) shows a compositional bias: basic and acidic residues. A compositionally biased stretch (polar residues) spans 255 to 266 (KLKTPSISTDSS). 4 CNA-B domains span residues 679 to 797 (TYSL…YLTP), 798 to 907 (KYNV…FYKP), 908 to 1018 (IYNL…YKTP), and 1019 to 1129 (KYSV…FDDD). A type I collagen binding region region spans residues 679–1129 (TYSLGDYVWL…SIDNGYFDDD (451 aa)). The disordered stretch occupies residues 862–889 (FETPEGYTPTKQNSGSDEGKDSNGTKTT). Residues 1085–1608 (KPEGMTQTTA…ANEDHDSKGT (524 aa)) form a disordered region. A compositionally biased stretch (basic and acidic residues) spans 1107–1119 (EDVRVTITDHDDF). Residues 1125 to 1584 (YFDDDSDSDS…DSDSDSDSDS (460 aa)) show a composition bias toward acidic residues. Residues 1585-1606 (DSDKNAKDKLPDTGANEDHDSK) are compositionally biased toward basic and acidic residues. The LPXTG sorting signal motif lies at 1594–1598 (LPDTG). The residue at position 1597 (Thr-1597) is a Pentaglycyl murein peptidoglycan amidated threonine. A propeptide spans 1598–1633 (GANEDHDSKGTLLGTLFAGLGALLLGRRRKKDNKEK) (removed by sortase).

The protein belongs to the serine-aspartate repeat-containing protein (SDr) family.

The protein localises to the secreted. It localises to the cell wall. Its function is as follows. Binds to type I collagen via alpha-2(I) or alpha-1(I) chains. This chain is Serine-aspartate repeat-containing protein F (sdrF), found in Staphylococcus epidermidis (strain ATCC 12228 / FDA PCI 1200).